The primary structure comprises 315 residues: MQPESGANGTVIAEFILLGLLEAPGLQPVVFVLFLFAYLVTVGGNLSILAAVLVEPKLHSPMYFFLGNLSVLDVGCISVTVPSMLSRLLSRKRAVPCGACLTQLFFFHLFVGVDCFLLTAMAYDRFLAICRPLTYSTRMSQTVQRMLVAASWACAFTNALTHTVAMSTLNFCGPNEVNHFYCDLPQLFQLSCSSTQLNELLLFAVGFIMAGTPMALIVISYIHVAAAVLRIRSVEGRKKAFSTCGSHLTVVAMFYGSGIFNYMRLGSTKLSDKDKAVGIFNTVINPMVNPIIYRFRNPEVQSAIWRMLTGRRSLA.

Topologically, residues 1–28 (MQPESGANGTVIAEFILLGLLEAPGLQP) are extracellular. Asn8 is a glycosylation site (N-linked (GlcNAc...) asparagine). The chain crosses the membrane as a helical span at residues 29–52 (VVFVLFLFAYLVTVGGNLSILAAV). At 53–60 (LVEPKLHS) the chain is on the cytoplasmic side. The chain crosses the membrane as a helical span at residues 61–82 (PMYFFLGNLSVLDVGCISVTVP). At 83–103 (SMLSRLLSRKRAVPCGACLTQ) the chain is on the extracellular side. Cys100 and Cys192 are disulfide-bonded. A helical transmembrane segment spans residues 104-123 (LFFFHLFVGVDCFLLTAMAY). Over 124-143 (DRFLAICRPLTYSTRMSQTV) the chain is Cytoplasmic. Residues 144-161 (QRMLVAASWACAFTNALT) traverse the membrane as a helical segment. Over 162–199 (HTVAMSTLNFCGPNEVNHFYCDLPQLFQLSCSSTQLNE) the chain is Extracellular. Residues 200-223 (LLLFAVGFIMAGTPMALIVISYIH) traverse the membrane as a helical segment. Residues 224–240 (VAAAVLRIRSVEGRKKA) lie on the Cytoplasmic side of the membrane. The helical transmembrane segment at 241–264 (FSTCGSHLTVVAMFYGSGIFNYMR) threads the bilayer. Residues 265–275 (LGSTKLSDKDK) are Extracellular-facing. A helical membrane pass occupies residues 276 to 295 (AVGIFNTVINPMVNPIIYRF). The Cytoplasmic portion of the chain corresponds to 296 to 315 (RNPEVQSAIWRMLTGRRSLA).

It belongs to the G-protein coupled receptor 1 family.

The protein resides in the cell membrane. Functionally, odorant receptor. The protein is Olfactory receptor 3A1 (OR3A1) of Pan troglodytes (Chimpanzee).